A 764-amino-acid chain; its full sequence is uncharacterized protein (764 aa).

Residues 1-646 (MKEENGFAGF…LTKLYTFPFT (646 aa)) lie on the Lumenal side of the membrane. Residues 22–173 (LNDTAPTKSQ…SAITAPSRKV (152 aa)) form a disordered region. Asparagine 23 is a glycosylation site (N-linked (GlcNAc...) asparagine). Composition is skewed to polar residues over residues 25 to 41 (TAPT…NNEG) and 61 to 82 (SEAS…QSPS). Serine 80 is modified (phosphoserine). Acidic residues predominate over residues 98–113 (ENQENEADEAENEETS). A glycan (N-linked (GlcNAc...) asparagine) is linked at asparagine 118. Over residues 118–145 (NHTENTEEIAEESRPLERTHSGSNHHEA) the composition is skewed to basic and acidic residues. Polar residues predominate over residues 158–173 (NTLSQGSAITAPSRKV). The GRAM domain maps to 197–264 (RDFHRIFKVL…TEIVSVEKKS (68 aa)). 2 N-linked (GlcNAc...) asparagine glycosylation sites follow: asparagine 240 and asparagine 330. A disordered region spans residues 320 to 406 (ASGNHHSGSS…DGNSVKKMNE (87 aa)). The segment covering 321 to 330 (SGNHHSGSSN) has biased composition (low complexity). Polar residues predominate over residues 331 to 340 (QSINADSSAG). A compositionally biased stretch (acidic residues) spans 352-371 (ANDESSEDDDEDNNTDEANE). 2 N-linked (GlcNAc...) asparagine glycosylation sites follow: asparagine 364 and asparagine 376. The segment covering 389 to 399 (HSDNVVLSDGN) has biased composition (polar residues). Positions 432-598 (LAHVLCSDVV…AFENYKVSPK (167 aa)) constitute a VASt domain. 2 N-linked (GlcNAc...) asparagine glycosylation sites follow: asparagine 442 and asparagine 554. The segment covering 598–613 (KGRRKKITKHTKKKNK) has biased composition (basic residues). A disordered region spans residues 598-626 (KGRRKKITKHTKKKNKHASETSVAPEKVD). The N-linked (GlcNAc...) asparagine glycan is linked to asparagine 627. Residues 647–667 (IITWLMHPTHLLLVVMFSMLV) traverse the membrane as a helical segment. Residues 668 to 764 (LQWWYMQQIL…LRKLEASGYI (97 aa)) are Cytoplasmic-facing.

Belongs to the YSP2 family.

It localises to the membrane. This is an uncharacterized protein from Schizosaccharomyces pombe (strain 972 / ATCC 24843) (Fission yeast).